Consider the following 178-residue polypeptide: ATP synthase subunit b (178 aa).

Residues Phe30–Pro50 traverse the membrane as a helical segment.

This sequence belongs to the ATPase B chain family. As to quaternary structure, F-type ATPases have 2 components, F(1) - the catalytic core - and F(0) - the membrane proton channel. F(1) has five subunits: alpha(3), beta(3), gamma(1), delta(1), epsilon(1). F(0) has three main subunits: a(1), b(2) and c(10-14). The alpha and beta chains form an alternating ring which encloses part of the gamma chain. F(1) is attached to F(0) by a central stalk formed by the gamma and epsilon chains, while a peripheral stalk is formed by the delta and b chains.

It is found in the cell membrane. F(1)F(0) ATP synthase produces ATP from ADP in the presence of a proton or sodium gradient. F-type ATPases consist of two structural domains, F(1) containing the extramembraneous catalytic core and F(0) containing the membrane proton channel, linked together by a central stalk and a peripheral stalk. During catalysis, ATP synthesis in the catalytic domain of F(1) is coupled via a rotary mechanism of the central stalk subunits to proton translocation. Its function is as follows. Component of the F(0) channel, it forms part of the peripheral stalk, linking F(1) to F(0). This chain is ATP synthase subunit b, found in Mycobacterium avium (strain 104).